The sequence spans 65 residues: MTKAAELRQKDVAGLEAEIKSLQKAHFGLRMQKATQQLGNTGTLRTTRRDIARAKTILAEKQAAK.

Belongs to the universal ribosomal protein uL29 family.

The chain is Large ribosomal subunit protein uL29 from Paracidovorax citrulli (strain AAC00-1) (Acidovorax citrulli).